The primary structure comprises 185 residues: Ribosome-recycling factor (185 aa).

Belongs to the RRF family.

It localises to the cytoplasm. In terms of biological role, responsible for the release of ribosomes from messenger RNA at the termination of protein biosynthesis. May increase the efficiency of translation by recycling ribosomes from one round of translation to another. The chain is Ribosome-recycling factor from Baumannia cicadellinicola subsp. Homalodisca coagulata.